The sequence spans 277 residues: Large ribosomal subunit protein uL2 (277 aa).

Disordered regions lie at residues 1 to 23 (MAIK…DFAE), 36 to 58 (PLHK…GGGH), and 219 to 277 (TVRG…RKNK). Polar residues predominate over residues 8-20 (PTSNGRRGMTSSD). Basic residues predominate over residues 258 to 277 (KTRKKKNKSDKFIVRRRKNK).

Belongs to the universal ribosomal protein uL2 family. As to quaternary structure, part of the 50S ribosomal subunit. Forms a bridge to the 30S subunit in the 70S ribosome.

In terms of biological role, one of the primary rRNA binding proteins. Required for association of the 30S and 50S subunits to form the 70S ribosome, for tRNA binding and peptide bond formation. It has been suggested to have peptidyltransferase activity; this is somewhat controversial. Makes several contacts with the 16S rRNA in the 70S ribosome. The protein is Large ribosomal subunit protein uL2 of Bacillus licheniformis (strain ATCC 14580 / DSM 13 / JCM 2505 / CCUG 7422 / NBRC 12200 / NCIMB 9375 / NCTC 10341 / NRRL NRS-1264 / Gibson 46).